A 28-amino-acid chain; its full sequence is Trypsin inhibitor 4 (28 aa).

Disulfide bonds link Cys2–Cys19, Cys9–Cys21, and Cys15–Cys27.

It belongs to the protease inhibitor I7 (squash-type serine protease inhibitor) family.

Its subcellular location is the secreted. Its function is as follows. Inhibits trypsin. The polypeptide is Trypsin inhibitor 4 (Luffa aegyptiaca (Sponge gourd)).